A 300-amino-acid polypeptide reads, in one-letter code: Regulatory protein NocR (300 aa).

In terms of domain architecture, HTH lysR-type spans 1–59 (MIQSRQLEAFRAVMLTGGMTSAANLVRITQPAISRLIRDLEEEIGISLFERTGNRLRPT). A DNA-binding region (H-T-H motif) is located at residues 19–38 (MTSAANLVRITQPAISRLIR).

The protein belongs to the LysR transcriptional regulatory family.

Functionally, positive regulatory protein for the noc operon involved in nopaline catabolism and uptake. This is Regulatory protein NocR (nocR) from Agrobacterium fabrum (strain C58 / ATCC 33970) (Agrobacterium tumefaciens (strain C58)).